A 231-amino-acid polypeptide reads, in one-letter code: Cytolethal distending toxin subunit A (231 aa).

An N-terminal signal peptide occupies residues Met-1–Ala-15. Cys-16 carries N-palmitoyl cysteine lipidation. A lipid anchor (S-diacylglycerol cysteine) is attached at Cys-16. The tract at residues Pro-20–Gly-51 is disordered. The mediates binding to target cells stretch occupies residues Trp-99 to Tyr-110. In terms of domain architecture, Ricin B-type lectin spans Ser-130–Ile-217.

As to quaternary structure, heterotrimer of 3 subunits, CdtA, CdtB and CdtC.

Its subcellular location is the cell outer membrane. In terms of biological role, CDTs are cytotoxins which induce cell distension, growth arrest in G2/M phase, nucleus swelling, and chromatin fragmentation in HeLa cells. The chain is Cytolethal distending toxin subunit A (cdtA) from Helicobacter hepaticus (strain ATCC 51449 / 3B1).